The primary structure comprises 410 residues: Serine hydroxymethyltransferase (410 aa).

(6S)-5,6,7,8-tetrahydrofolate-binding positions include L119 and 123–125; that span reads GHL. Residue K228 is modified to N6-(pyridoxal phosphate)lysine. (6S)-5,6,7,8-tetrahydrofolate is bound at residue 351-353; sequence SPF.

The protein belongs to the SHMT family. In terms of assembly, homodimer. The cofactor is pyridoxal 5'-phosphate.

The protein resides in the cytoplasm. The catalysed reaction is (6R)-5,10-methylene-5,6,7,8-tetrahydrofolate + glycine + H2O = (6S)-5,6,7,8-tetrahydrofolate + L-serine. It functions in the pathway one-carbon metabolism; tetrahydrofolate interconversion. It participates in amino-acid biosynthesis; glycine biosynthesis; glycine from L-serine: step 1/1. Its function is as follows. Catalyzes the reversible interconversion of serine and glycine with tetrahydrofolate (THF) serving as the one-carbon carrier. This reaction serves as the major source of one-carbon groups required for the biosynthesis of purines, thymidylate, methionine, and other important biomolecules. Also exhibits THF-independent aldolase activity toward beta-hydroxyamino acids, producing glycine and aldehydes, via a retro-aldol mechanism. In Alkaliphilus metalliredigens (strain QYMF), this protein is Serine hydroxymethyltransferase.